The following is a 392-amino-acid chain: Cytochrome b (392 aa).

4 helical membrane-spanning segments follow: residues 38-58 (FGSL…FLAM), 82-104 (WLLR…LHIF), 119-139 (VRCL…TGYV), and 185-205 (FFSL…LHLA). Positions 88 and 102 each coordinate heme b. Positions 189 and 203 each coordinate heme b. Residue histidine 208 participates in a ubiquinone binding. The next 4 membrane-spanning stretches (helical) occupy residues 231-251 (FYVK…IWIF), 295-315 (SGGV…PFFK), 327-347 (IHQG…WIGC), and 354-373 (FVTI…AITP).

It belongs to the cytochrome b family. As to quaternary structure, the main subunits of complex b-c1 are: cytochrome b, cytochrome c1 and the Rieske protein. Requires heme b as cofactor.

Its subcellular location is the mitochondrion inner membrane. Functionally, component of the ubiquinol-cytochrome c reductase complex (complex III or cytochrome b-c1 complex) that is part of the mitochondrial respiratory chain. The b-c1 complex mediates electron transfer from ubiquinol to cytochrome c. Contributes to the generation of a proton gradient across the mitochondrial membrane that is then used for ATP synthesis. The protein is Cytochrome b (MT-CYB) of Vicia faba (Broad bean).